The sequence spans 160 residues: ATP synthase subunit delta, mitochondrial (160 aa).

A mitochondrion-targeting transit peptide spans 1–22 (MLRSIIGKSASRSLNFVAKRSY).

This sequence belongs to the ATPase epsilon chain family. As to quaternary structure, F-type ATPases have 2 components, CF(1) - the catalytic core - and CF(0) - the membrane proton channel. CF(1) has five subunits: alpha(3), beta(3), gamma(1), delta(1), epsilon(1). CF(0) has three main subunits: a, b and c.

Its subcellular location is the mitochondrion. It is found in the mitochondrion inner membrane. Functionally, mitochondrial membrane ATP synthase (F(1)F(0) ATP synthase or Complex V) produces ATP from ADP in the presence of a proton gradient across the membrane which is generated by electron transport complexes of the respiratory chain. F-type ATPases consist of two structural domains, F(1) - containing the extramembraneous catalytic core, and F(0) - containing the membrane proton channel, linked together by a central stalk and a peripheral stalk. During catalysis, ATP turnover in the catalytic domain of F(1) is coupled via a rotary mechanism of the central stalk subunits to proton translocation. Part of the complex F(1) domain and of the central stalk which is part of the complex rotary element. Rotation of the central stalk against the surrounding alpha(3)beta(3) subunits leads to hydrolysis of ATP in three separate catalytic sites on the beta subunits. This chain is ATP synthase subunit delta, mitochondrial (ATP16), found in Saccharomyces cerevisiae (strain ATCC 204508 / S288c) (Baker's yeast).